The sequence spans 253 residues: Uracil-DNA glycosylase (253 aa).

Asp79 functions as the Proton acceptor in the catalytic mechanism.

Belongs to the uracil-DNA glycosylase (UDG) superfamily. UNG family.

It localises to the cytoplasm. It carries out the reaction Hydrolyzes single-stranded DNA or mismatched double-stranded DNA and polynucleotides, releasing free uracil.. Excises uracil residues from the DNA which can arise as a result of misincorporation of dUMP residues by DNA polymerase or due to deamination of cytosine. The sequence is that of Uracil-DNA glycosylase from Xylella fastidiosa (strain M12).